We begin with the raw amino-acid sequence, 978 residues long: Translation initiation factor IF-2 (978 aa).

Disordered stretches follow at residues 107-129 (AEAP…NLEL) and 146-387 (QEEE…HRVQ). Basic and acidic residues predominate over residues 146 to 169 (QEEELSERRRQREEQEARSREASE). A compositionally biased stretch (low complexity) spans 170–186 (KAAAVAAEAAEAAAAQA). A compositionally biased stretch (basic and acidic residues) spans 215 to 259 (AEKEQHLAKEKGLAREKELAESKARAAEDVVRAADLGDRRRKAES). Composition is skewed to low complexity over residues 295 to 326 (KPAA…AGAG) and 349 to 361 (PTRG…GAGR). Positions 375-386 (GSSDRDRDDHRV) are enriched in basic and acidic residues. The region spanning 478 to 647 (PRAPVVTVMG…LLQAEVLELK (170 aa)) is the tr-type G domain. Positions 487-494 (GHVDHGKT) are G1. Residue 487–494 (GHVDHGKT) coordinates GTP. Residues 512–516 (GITQH) are G2. The interval 533–536 (DTPG) is G3. Residues 533-537 (DTPGH) and 587-590 (NKID) each bind GTP. The interval 587–590 (NKID) is G4. The tract at residues 623–625 (SAK) is G5.

The protein belongs to the TRAFAC class translation factor GTPase superfamily. Classic translation factor GTPase family. IF-2 subfamily.

Its subcellular location is the cytoplasm. In terms of biological role, one of the essential components for the initiation of protein synthesis. Protects formylmethionyl-tRNA from spontaneous hydrolysis and promotes its binding to the 30S ribosomal subunits. Also involved in the hydrolysis of GTP during the formation of the 70S ribosomal complex. The polypeptide is Translation initiation factor IF-2 (Albidiferax ferrireducens (strain ATCC BAA-621 / DSM 15236 / T118) (Rhodoferax ferrireducens)).